The chain runs to 835 residues: Ubiquitin carboxyl-terminal hydrolase 26 (835 aa).

The segment at 102–128 (SQGSIRPARSDERCGEPSTSAQELNGS) is disordered. The span at 118–128 (PSTSAQELNGS) shows a compositional bias: polar residues. The 531-residue stretch at 286–816 (QGLPNVGNTC…TGYVFFYMHN (531 aa)) folds into the USP domain. C295 acts as the Nucleophile in catalysis. The tract at residues 597-747 (NRESEAQSGK…TRKVDPTKLN (151 aa)) is disordered. Composition is skewed to basic and acidic residues over residues 634–652 (LTKE…RPSD) and 669–679 (KCNEGRSDKQI). Residues 683 to 708 (ALTQSRPKPISQEQTENLGKTTLSHT) are compositionally biased toward polar residues. Over residues 709–725 (QDSSQSSQSSSDSSKSS) the composition is skewed to low complexity. Positions 726 to 747 (RCSDDLDKKAKPTRKVDPTKLN) are enriched in basic and acidic residues. The active-site Proton acceptor is H771.

The protein belongs to the peptidase C19 family. As to quaternary structure, interacts with RING1.

It localises to the nucleus. Its subcellular location is the cytoplasm. The protein localises to the cytoskeleton. It is found in the flagellum axoneme. It catalyses the reaction Thiol-dependent hydrolysis of ester, thioester, amide, peptide and isopeptide bonds formed by the C-terminal Gly of ubiquitin (a 76-residue protein attached to proteins as an intracellular targeting signal).. Its function is as follows. Deubiquitinase regulating several biological processes through the deubiquitination of components of these processes. Involved in somatic cell reprogramming through the 'Lys-48'-linked deubiquitination and stabilization of CBX4 and CBX6, two components of the polycomb-repressive complex 1 (PRC1). Also deubiquitinates and probably stabilizes the androgen receptor (AR), regulating the androgen receptor signaling pathway. May play a role in spermatogenesis. The sequence is that of Ubiquitin carboxyl-terminal hydrolase 26 from Mus musculus (Mouse).